Here is a 413-residue protein sequence, read N- to C-terminus: Histidinol-phosphate aminotransferase, chloroplastic (413 aa).

A chloroplast-targeting transit peptide spans 1 to 35; that stretch reads MGVIELCNTSSICIGRANPSCCSIERNQRRRIICM. An N6-(pyridoxal phosphate)lysine modification is found at Lys-273.

It belongs to the class-II pyridoxal-phosphate-dependent aminotransferase family. Histidinol-phosphate aminotransferase subfamily. Homodimer. Pyridoxal 5'-phosphate is required as a cofactor. As to expression, expressed in flowers, leaves, stems and roots.

It is found in the plastid. Its subcellular location is the chloroplast. The catalysed reaction is L-histidinol phosphate + 2-oxoglutarate = 3-(imidazol-4-yl)-2-oxopropyl phosphate + L-glutamate. Its pathway is amino-acid biosynthesis; L-histidine biosynthesis; L-histidine from 5-phospho-alpha-D-ribose 1-diphosphate: step 7/9. The chain is Histidinol-phosphate aminotransferase, chloroplastic (HPA) from Nicotiana plumbaginifolia (Leadwort-leaved tobacco).